We begin with the raw amino-acid sequence, 181 residues long: NADH-quinone oxidoreductase subunit I (181 aa).

4Fe-4S ferredoxin-type domains follow at residues 44-74 and 90-119; these read LNRYPDGLEKCIGCELCAWACPADAIYVEGA and RVYQINYLRCIGCGLCIEACPTRALTMTND. The [4Fe-4S] cluster site is built by Cys54, Cys57, Cys60, Cys64, Cys99, Cys102, Cys105, and Cys109.

Belongs to the complex I 23 kDa subunit family. As to quaternary structure, NDH-1 is composed of 14 different subunits. Subunits NuoA, H, J, K, L, M, N constitute the membrane sector of the complex. Requires [4Fe-4S] cluster as cofactor.

The protein localises to the cell membrane. The enzyme catalyses a quinone + NADH + 5 H(+)(in) = a quinol + NAD(+) + 4 H(+)(out). Functionally, NDH-1 shuttles electrons from NADH, via FMN and iron-sulfur (Fe-S) centers, to quinones in the respiratory chain. The immediate electron acceptor for the enzyme in this species is believed to be menaquinone. Couples the redox reaction to proton translocation (for every two electrons transferred, four hydrogen ions are translocated across the cytoplasmic membrane), and thus conserves the redox energy in a proton gradient. The sequence is that of NADH-quinone oxidoreductase subunit I from Mycobacterium marinum (strain ATCC BAA-535 / M).